Reading from the N-terminus, the 141-residue chain is Hemoglobin subunit alpha (141 aa).

Positions 1-141 (VLSSKDKANV…VSTVLTSKYR (141 aa)) constitute a Globin domain. A Phosphoserine modification is found at serine 3. N6-succinyllysine is present on residues lysine 7 and lysine 11. Lysine 16 bears the N6-acetyllysine; alternate mark. Residue lysine 16 is modified to N6-succinyllysine; alternate. Phosphotyrosine is present on tyrosine 24. The residue at position 40 (lysine 40) is an N6-succinyllysine. A Phosphoserine modification is found at serine 49. Histidine 58 contacts O2. Histidine 87 provides a ligand contact to heme b. The residue at position 102 (serine 102) is a Phosphoserine. The residue at position 108 (threonine 108) is a Phosphothreonine. Serine 124 is modified (phosphoserine). Threonine 134 and threonine 137 each carry phosphothreonine. Serine 138 carries the post-translational modification Phosphoserine.

The protein belongs to the globin family. As to quaternary structure, heterotetramer of two alpha chains and two beta chains. In terms of tissue distribution, red blood cells.

Involved in oxygen transport from the lung to the various peripheral tissues. In terms of biological role, hemopressin acts as an antagonist peptide of the cannabinoid receptor CNR1. Hemopressin-binding efficiently blocks cannabinoid receptor CNR1 and subsequent signaling. The polypeptide is Hemoglobin subunit alpha (HBA) (Lama vicugna (Vicugna)).